A 142-amino-acid chain; its full sequence is Small ribosomal subunit protein uS12 (142 aa).

This sequence belongs to the universal ribosomal protein uS12 family. In terms of assembly, part of the 30S ribosomal subunit.

Its function is as follows. With S4 and S5 plays an important role in translational accuracy. Located at the interface of the 30S and 50S subunits. The sequence is that of Small ribosomal subunit protein uS12 from Methanoregula boonei (strain DSM 21154 / JCM 14090 / 6A8).